We begin with the raw amino-acid sequence, 179 residues long: ATP-dependent protease subunit HslV (179 aa).

Thr5 is an active-site residue. Na(+) is bound by residues Gly164, Cys167, and Thr170.

The protein belongs to the peptidase T1B family. HslV subfamily. A double ring-shaped homohexamer of HslV is capped on each side by a ring-shaped HslU homohexamer. The assembly of the HslU/HslV complex is dependent on binding of ATP.

The protein localises to the cytoplasm. The enzyme catalyses ATP-dependent cleavage of peptide bonds with broad specificity.. Allosterically activated by HslU binding. In terms of biological role, protease subunit of a proteasome-like degradation complex believed to be a general protein degrading machinery. The sequence is that of ATP-dependent protease subunit HslV from Verminephrobacter eiseniae (strain EF01-2).